The following is a 325-amino-acid chain: Beta-ketoacyl-[acyl-carrier-protein] synthase III (325 aa).

Residues C119 and H252 contribute to the active site. The ACP-binding stretch occupies residues 253–257 (QANIR). The active site involves N282.

Belongs to the thiolase-like superfamily. FabH family. In terms of assembly, homodimer.

The protein resides in the cytoplasm. The enzyme catalyses malonyl-[ACP] + acetyl-CoA + H(+) = 3-oxobutanoyl-[ACP] + CO2 + CoA. It participates in lipid metabolism; fatty acid biosynthesis. Catalyzes the condensation reaction of fatty acid synthesis by the addition to an acyl acceptor of two carbons from malonyl-ACP. Catalyzes the first condensation reaction which initiates fatty acid synthesis and may therefore play a role in governing the total rate of fatty acid production. Possesses both acetoacetyl-ACP synthase and acetyl transacylase activities. Its substrate specificity determines the biosynthesis of branched-chain and/or straight-chain of fatty acids. In Polaromonas sp. (strain JS666 / ATCC BAA-500), this protein is Beta-ketoacyl-[acyl-carrier-protein] synthase III.